The sequence spans 384 residues: S-adenosylmethionine synthase (384 aa).

His-15 contacts ATP. Asp-17 is a binding site for Mg(2+). K(+) is bound at residue Glu-43. L-methionine is bound by residues Glu-56 and Gln-99. Positions 99–109 are flexible loop; it reads QSPDINQGVDR. ATP contacts are provided by residues 164 to 166, 230 to 231, Asp-239, 245 to 246, Ala-262, and Lys-266; these read DAK, RF, and RK. Asp-239 contacts L-methionine. Lys-270 contributes to the L-methionine binding site.

The protein belongs to the AdoMet synthase family. Homotetramer; dimer of dimers. Requires Mg(2+) as cofactor. It depends on K(+) as a cofactor.

It is found in the cytoplasm. It catalyses the reaction L-methionine + ATP + H2O = S-adenosyl-L-methionine + phosphate + diphosphate. It participates in amino-acid biosynthesis; S-adenosyl-L-methionine biosynthesis; S-adenosyl-L-methionine from L-methionine: step 1/1. In terms of biological role, catalyzes the formation of S-adenosylmethionine (AdoMet) from methionine and ATP. The overall synthetic reaction is composed of two sequential steps, AdoMet formation and the subsequent tripolyphosphate hydrolysis which occurs prior to release of AdoMet from the enzyme. In Salmonella gallinarum (strain 287/91 / NCTC 13346), this protein is S-adenosylmethionine synthase.